A 301-amino-acid polypeptide reads, in one-letter code: MPIIIDKDLPARKVLQEENIFVMTKERAETQDIRALKIAILNLMPTKQETEAQLLRLIGNTPLQLDVHLLHMESHLSRNVAQEHLTSFYKTFRDIENEKFDGLIITGAPVETLSFEEVDYWEELKRIMEYSKTNVTSTLHICWGAQAGLYHHYGVQKYPLKEKMFGVFEHEVREQHVKLLQGFDELFFAPHSRHTEVRESDIREVKELTLLANSEEAGVHLVIGQEGRQVFALGHSEYSCDTLKQEYERDRDKGLNIDVPKNYFKHDNPNEKPLVRWRSHGNLLFSNWLNYYVYQETPYVL.

Cys142 acts as the Acyl-thioester intermediate in catalysis. Substrate-binding residues include Lys163 and Ser192. The active-site Proton acceptor is His235. Glu237 is an active-site residue. Arg249 is a substrate binding site.

Belongs to the MetA family. Homodimer.

Its subcellular location is the cytoplasm. The enzyme catalyses L-homoserine + acetyl-CoA = O-acetyl-L-homoserine + CoA. Its pathway is amino-acid biosynthesis; L-methionine biosynthesis via de novo pathway; O-acetyl-L-homoserine from L-homoserine: step 1/1. Its function is as follows. Transfers an acetyl group from acetyl-CoA to L-homoserine, forming acetyl-L-homoserine. Utilizes a ping-pong kinetic mechanism in which the acetyl group of acetyl-CoA is initially transferred to the enzyme to form an acetyl-enzyme intermediate before subsequent transfer to homoserine to form the final product, O-acetylhomoserine. Cannot use succinyl-CoA as the acyl donor. The sequence is that of Homoserine O-acetyltransferase from Bacillus cereus (strain ATCC 10987 / NRS 248).